A 509-amino-acid polypeptide reads, in one-letter code: Tyrosine-protein kinase STK (509 aa).

A compositionally biased stretch (polar residues) spans 1–16 (MGPCCSKQTKALNNQP). The tract at residues 1–23 (MGPCCSKQTKALNNQPDKSKSKD) is disordered. Residue Gly2 is the site of N-myristoyl glycine attachment. An SH3 domain is found at 59–120 (PGVTIFVALY…PSTYVAPEKS (62 aa)). In terms of domain architecture, SH2 spans 126–218 (WYFGDVKRAE…GLVCALTLPC (93 aa)). A Protein kinase domain is found at 240 to 495 (LRLNRKLGAG…LQGVLEDYFV (256 aa)). ATP is bound by residues 246–254 (LGAGQFGEV) and Lys268. Asp360 serves as the catalytic Proton acceptor. The residue at position 390 (Tyr390) is a Phosphotyrosine; by autocatalysis.

It belongs to the protein kinase superfamily. Tyr protein kinase family. SRC subfamily.

The catalysed reaction is L-tyrosyl-[protein] + ATP = O-phospho-L-tyrosyl-[protein] + ADP + H(+). This Hydra vulgaris (Hydra) protein is Tyrosine-protein kinase STK (STK).